We begin with the raw amino-acid sequence, 535 residues long: ABC1 family protein C10F6.14c (535 aa).

The protein belongs to the protein kinase superfamily. ADCK protein kinase family.

In Schizosaccharomyces pombe (strain 972 / ATCC 24843) (Fission yeast), this protein is ABC1 family protein C10F6.14c.